A 256-amino-acid polypeptide reads, in one-letter code: uncharacterized protein (256 aa).

2 consecutive transmembrane segments (helical) span residues 181–201 (CCII…ASMV) and 231–251 (GIAV…GLIA).

The protein resides in the cell membrane. This is an uncharacterized protein from Methanocaldococcus jannaschii (strain ATCC 43067 / DSM 2661 / JAL-1 / JCM 10045 / NBRC 100440) (Methanococcus jannaschii).